The following is a 205-amino-acid chain: Thymidylate kinase (205 aa).

7–14 (GIDGSGKT) contributes to the ATP binding site.

Belongs to the thymidylate kinase family.

It carries out the reaction dTMP + ATP = dTDP + ADP. Its function is as follows. Phosphorylation of dTMP to form dTDP in both de novo and salvage pathways of dTTP synthesis. This Wolbachia sp. subsp. Brugia malayi (strain TRS) protein is Thymidylate kinase.